Here is a 532-residue protein sequence, read N- to C-terminus: MDSLQLWQRYCDWLYYHPGLEIFVDISRIRFTPPQVEALRPRFAQAFADMQALEAGAIANPDEGRQVGHYWLRAPELAPTPEIRQAIQDSIERVETFAEKIHRGTIPASGGGRFTELLCIGIGGSALGPQFVAEALAPLHPPLNIHFIDNTDPDGFDRVLGRLADQLGQTLVITTSKSGGTPEPRNGLVEVKLAYQKAGIPFSAHAVAITGPGSQLEQQARQEGWLEVFPIFDWVGGRTSETSPVGLLPAALQGIDIRALLAGAATMDEATRLPHLERNPAALLAMAWYIVGQGQGRKDMVVLPYKDRLLLFSRYLQQLVMESLGKSHDLNGNRVEQGIAVYGNKGTTDQHAYVQQLRDGLNNFFVTFIEVLQDREPGIPSPFVEPQVTSGDYLNGLLQGTRQALYENGRDSITVTLPRVDARSVGALIALYERAVGLYASLIQINAYHQPGVEAGKKAASAVLELQRRLLETVQEQQGSLTLPQLAEKLGCPERIETLYWIVRHLHANGRGVLLTGDPARPLELSIQPQPA.

Glu-322 functions as the Proton donor in the catalytic mechanism. Residues His-351 and Lys-457 contribute to the active site.

The protein belongs to the GPI family.

Its subcellular location is the cytoplasm. The catalysed reaction is alpha-D-glucose 6-phosphate = beta-D-fructose 6-phosphate. It functions in the pathway carbohydrate biosynthesis; gluconeogenesis. The protein operates within carbohydrate degradation; glycolysis; D-glyceraldehyde 3-phosphate and glycerone phosphate from D-glucose: step 2/4. Its function is as follows. Catalyzes the reversible isomerization of glucose-6-phosphate to fructose-6-phosphate. The chain is Glucose-6-phosphate isomerase from Synechococcus sp. (strain JA-2-3B'a(2-13)) (Cyanobacteria bacterium Yellowstone B-Prime).